Reading from the N-terminus, the 217-residue chain is MAHSIWHEKIKSFLPEHYYGRINHFLDEAYASGLVYPPRENVFKALQVTPLEETKVLILGQDPYHGPKQAQGLSFSVPEEISAPPSLINILKELADDIGPRDHHDLSTWASQGVLLLNACLTVPAGQANGHAGLIWEPFTDAVIKVLNEKDSPVVFILWGAYARKKKAFITNPKHHIIESPHPSPLSSYRGFFGSKPFSRTNAILEKEGMTGVDWLK.

Catalysis depends on Asp-62, which acts as the Proton acceptor.

The protein belongs to the uracil-DNA glycosylase (UDG) superfamily. UNG family.

Its subcellular location is the cytoplasm. It carries out the reaction Hydrolyzes single-stranded DNA or mismatched double-stranded DNA and polynucleotides, releasing free uracil.. In terms of biological role, excises uracil residues from the DNA which can arise as a result of misincorporation of dUMP residues by DNA polymerase or due to deamination of cytosine. In Streptococcus pyogenes serotype M1, this protein is Uracil-DNA glycosylase.